The sequence spans 756 residues: MTTSVALDWVVQDGQRLAECRHDHPFSLLGPQSHEGQWIVRIWMPEASQVELLCDGRTTAMTTPNHSWIFEAALNQDPGRTYQLRVKRAGIVHEQHDPWAFHDEWMGEMDRHLFAEGNHHHIWQRMGAHLMEREGVEGVMFCLWAPRACSVAVLGELNGWDGRHHPMQRRQGGLWELFIPGFKEGTLYKYEIRTQDGHCYQKADPYGFQHEVRPATSSVVARLDRYQWQDEQWMRQRDSRNALDQPISVYEMHLGSWIHAATDEPYIELDGTPRAPVLAADMKPGARLLTYPELADQLIPYVKDRGFTHIELMPISEHPFDGSWGYQVTGWYAPTSRFGSPDEFRAFVDRCHAEGLGVIIDWVPGHFPKDGHGLAFFDGTHLYEHSDPRIGEHKEWGTLIFNYSRNEVRNFLVANLVYWFEQFHIDGIRVDAVASMLYRDYLRPDGEWIANEDGGRENTEAVRFLQQANHVLFQHFPGALSIAEESTTWPMVTQPTDMGGLGFNLKWNMGWMHDMLDYFELDPWFRQFHQNNITFSIWYTYTENFMLALSHDEVVHGKSNLLHKMPGDDWQKCANVRALLAYMWTHPGKKTIFMGMEFGQRSEWNVWGDLQWELLTHDPHKGLQKLVDDLNTFYKAEPALWKDDFDQYGFQWIDCNDNRHSIISFMRRESSGGTWLVVVANFTPQSHSNYRIGVPIGGYYEEVFNTDSSCYGGRNLGNMGGKNTDEFNIHGYEQSLELCLPALSVLVFRHDPKRSL.

The active-site Nucleophile is D431. E484 acts as the Proton donor in catalysis.

It belongs to the glycosyl hydrolase 13 family. GlgB subfamily. As to quaternary structure, monomer.

It catalyses the reaction Transfers a segment of a (1-&gt;4)-alpha-D-glucan chain to a primary hydroxy group in a similar glucan chain.. It participates in glycan biosynthesis; glycogen biosynthesis. In terms of biological role, catalyzes the formation of the alpha-1,6-glucosidic linkages in glycogen by scission of a 1,4-alpha-linked oligosaccharide from growing alpha-1,4-glucan chains and the subsequent attachment of the oligosaccharide to the alpha-1,6 position. This is 1,4-alpha-glucan branching enzyme GlgB from Prochlorococcus marinus (strain MIT 9303).